The chain runs to 1353 residues: MSDNRLFTSVETLNLSSPVLEKLKLSGINTLEDFNTFTLEELRLLLQEAFLEVLPILKNFALPRNLQNLDLSEAVINILTELGMEDFQDLLQTKMAVLTKAFETNPLAFQKLNDLFKLYNHFPSISSDKEYGSRDYDYFKIRLAAPEEIRQWSYGEVTSYETINYRTYKPEISGLFCQKIFGPVVDFQCACSKKQVSIKSQFCNKCGVEFTETKVRRERMGHIELQTPIVHTWYLNSSPSRLAILLNIKTKQLEEIVYYVSYVVIDPGKTEFKPKEIITETQYSEALYEFGNAFVALTGAEAVKKLLENLNLEKTIKVLRKSLSENSKQKRESIIKRLEIIESFHQSDNKPEWMVMDVIPVLPPGLRPMVPLDGGRFATTEVNDLYRRILNRNNRLKKQMLQKAPRLIIKNEKRMLQEAVDALFDNAKTSKKNVNNVEKNRPLKSLSEMLRGKQGRFRQNLLGKRVDYSGRSVIIVGPDLEMHQCGVPREMAIILFKPFILKKLQETKGIDKKNANTIYEKMNEEVWNALEEVVKEHPVLLNRAPTLHRLGIQAFDPKLIDGKAIRLHPLVTPAFNADFDGDQMAIYVPLSLEAQAEARLLMLVSNNILDPKNGNPVVTPSQDMVLGNYYLTIEEKKDRTINSYDAAQRTAEHQYKHRNEGAFFADINEAKTAYQNKEIHLHTRIFIKPQAINLSFTEEQRQKYLMTTLGKLIFNDILPPSFPYINEPTQFNLDVKTPDAYFLAPGTNPKQFLKKLPTPKPFNKKFLSMIIACFFKQMKITETSKMLDHIKNLGFKYSTIAGITVSFADINTYSNKQELLQEVEARNIQIETWYNDGFLTDAERRRLVINEWKNIRDEIQEGLMKEFQQDNHIFMMSESGARGSVSNFTQLAGMRGLMNNPKGEIIEVPVKASFREGLKVSEFFISTHGARKGSTDTALKTAESGYLTRRLVDVTQDIVVIKEDCNSDRGFVVEAMISDGKEIVSLKQRIMGRFASCDICHPKTNALIIARNELITESKAQEIITAKIKKVPIRSILTCNCEYGICAKDYGVNLATNKLVEIGEAVGVIAAQSIGEPGTQLTMRTFHTGGVASASDITQGLPRIEELFEVRKPKGKALISELKGKIKKIDKIRSQNPEIVITEENDPDTEHRYILEPNVDILVSKNNSVYPGQKLTSGSVDLKELLRVAGTTEAQKYILEEVQKVYRAQNVYISDKHIEIIIHQMFKQILIIDEGDTQLLPGTEITINNFKKANLKMLEENKLLAVGRPIILGITRSSLRSDSLLSAASFQETTKILIDAAIKGKTDHLYGLKENVIIGGLIPAGTGILETTLFKYPKEPATTSELAEKTNQN.

Residues 1 to 117 (MSDNRLFTSV…AFQKLNDLFK (117 aa)) are unknown. The interval 118–1353 (LYNHFPSISS…SELAEKTNQN (1236 aa)) is DNA-directed RNA polymerase subunit beta'. Zn(2+) contacts are provided by cysteine 189, cysteine 191, cysteine 203, and cysteine 206. Residues aspartate 578, aspartate 580, and aspartate 582 each coordinate Mg(2+).

This sequence belongs to the RNA polymerase beta' chain family. As to quaternary structure, the RNAP catalytic core consists of 2 alpha, 1 beta, 1 beta' and 1 omega subunit. When a sigma factor is associated with the core the holoenzyme is formed, which can initiate transcription. Requires Mg(2+) as cofactor. The cofactor is Zn(2+).

It carries out the reaction RNA(n) + a ribonucleoside 5'-triphosphate = RNA(n+1) + diphosphate. In terms of biological role, DNA-dependent RNA polymerase catalyzes the transcription of DNA into RNA using the four ribonucleoside triphosphates as substrates. The polypeptide is DNA-directed RNA polymerase subunit beta' (Onion yellows phytoplasma (strain OY-M)).